We begin with the raw amino-acid sequence, 401 residues long: ATP phosphoribosyltransferase regulatory subunit (401 aa).

The segment at 373–401 is disordered; sequence PGQQGGAAAQGCDRRLQQDDGGGWVTRPL. The span at 392–401 shows a compositional bias: gly residues; sequence DGGGWVTRPL.

Belongs to the class-II aminoacyl-tRNA synthetase family. HisZ subfamily. Heteromultimer composed of HisG and HisZ subunits.

It is found in the cytoplasm. It participates in amino-acid biosynthesis; L-histidine biosynthesis; L-histidine from 5-phospho-alpha-D-ribose 1-diphosphate: step 1/9. Functionally, required for the first step of histidine biosynthesis. May allow the feedback regulation of ATP phosphoribosyltransferase activity by histidine. The sequence is that of ATP phosphoribosyltransferase regulatory subunit from Alkalilimnicola ehrlichii (strain ATCC BAA-1101 / DSM 17681 / MLHE-1).